A 532-amino-acid chain; its full sequence is Phosphoenolpyruvate carboxykinase (ATP) (532 aa).

Substrate is bound by residues Arg60, Tyr194, and Lys200. ATP is bound by residues Lys200, His219, and 237–245; that span reads GLSGTGKTT. Residues Lys200 and His219 each contribute to the Mn(2+) site. Residue Asp258 coordinates Mn(2+). Positions 286, 324, and 449 each coordinate ATP. Arg324 lines the substrate pocket.

This sequence belongs to the phosphoenolpyruvate carboxykinase (ATP) family. It depends on Mn(2+) as a cofactor.

It is found in the cytoplasm. It catalyses the reaction oxaloacetate + ATP = phosphoenolpyruvate + ADP + CO2. It functions in the pathway carbohydrate biosynthesis; gluconeogenesis. Functionally, involved in the gluconeogenesis. Catalyzes the conversion of oxaloacetate (OAA) to phosphoenolpyruvate (PEP) through direct phosphoryl transfer between the nucleoside triphosphate and OAA. The polypeptide is Phosphoenolpyruvate carboxykinase (ATP) (Roseobacter denitrificans (strain ATCC 33942 / OCh 114) (Erythrobacter sp. (strain OCh 114))).